The primary structure comprises 574 residues: MKPVFSVDQIRRAENTLFELQADPDELMISAASAVADVALAMVDGPAPAVSSEESILLLVGPGGNGGDALYAGAFLAEEGHHVDALLLGNGKVHQSALAYYESLGGQIISDFPPHYLYRLVIDGLFGIGGRGGLTPELASLVESFSASGIPILAIDVPSGVHADSGELPPGVMVTVEGFDNDAPMARQKIPAHIDADVTITFGGLRRAHAVSPACGEVLCADINIAGGGGKSLSAELSQVQAEDATPQMFASKAYQRKDSLFERANLKATAPHIHRIGQHFTVLNMEPGPDHDKYSGGIVGIVAGSGTYPGAAVLSVKAAVRATSAMVRYVGPALNFVIQSLPEVVATQSLATAGRVQAWVHGPGRGLEAEQSAELAELLSRPEPVLIDADSLSLLQLSAELRQALRERKAPTVLTPHKGEFERIAAELRSEGVEIPQADKDPIGAAQALAKEFDCCVLLKGKYTVIAAHDFVHAINAGHSWLATPGSGDVLSGLVGAHLAQSYAELNRLPEFFPDVTLSDSAIYTQIAPAATIHAVAAGLAARTEFGFAPTSASLIADAIPAATAKVDLKRIV.

Positions 1-269 are NAD(P)H-hydrate epimerase; sequence MKPVFSVDQI…SLFERANLKA (269 aa). The 222-residue stretch at 10-231 folds into the YjeF N-terminal domain; that stretch reads IRRAENTLFE…DINIAGGGGK (222 aa). Positions 64–68 are NADPHX 1; for epimerase activity; that stretch reads GNGGD. K(+)-binding residues include Asn-65 and Asp-123. An NADPHX 1; for epimerase activity region spans residues 127 to 133; the sequence is GIGGRGG. Asp-156 provides a ligand contact to (6S)-NADPHX. Ser-159 is a binding site for K(+). In terms of domain architecture, YjeF C-terminal spans 277–568; it reads IGQHFTVLNM…DAIPAATAKV (292 aa). The interval 277-574 is ADP-dependent (S)-NAD(P)H-hydrate dehydratase; that stretch reads IGQHFTVLNM…TAKVDLKRIV (298 aa). Gly-365 is a (6S)-NADPHX binding site. The tract at residues 418 to 424 is NADPHX 2; for dehydratase activity; the sequence is HKGEFER. ADP is bound by residues 461–465 and 480–489; these read KGKYT and HSWLATPGSG. (6S)-NADPHX is bound at residue Asp-490.

In the N-terminal section; belongs to the NnrE/AIBP family. The protein in the C-terminal section; belongs to the NnrD/CARKD family. K(+) serves as cofactor.

It catalyses the reaction (6S)-NADHX + ADP = AMP + phosphate + NADH + H(+). It carries out the reaction (6S)-NADPHX + ADP = AMP + phosphate + NADPH + H(+). The enzyme catalyses (6R)-NADHX = (6S)-NADHX. The catalysed reaction is (6R)-NADPHX = (6S)-NADPHX. Bifunctional enzyme that catalyzes the epimerization of the S- and R-forms of NAD(P)HX and the dehydration of the S-form of NAD(P)HX at the expense of ADP, which is converted to AMP. This allows the repair of both epimers of NAD(P)HX, a damaged form of NAD(P)H that is a result of enzymatic or heat-dependent hydration. The sequence is that of Bifunctional NAD(P)H-hydrate repair enzyme Nnr (nnr) from Corynebacterium glutamicum (strain ATCC 13032 / DSM 20300 / JCM 1318 / BCRC 11384 / CCUG 27702 / LMG 3730 / NBRC 12168 / NCIMB 10025 / NRRL B-2784 / 534).